Here is a 293-residue protein sequence, read N- to C-terminus: Homoserine kinase (293 aa).

83–93 (RPKSGLGSSGA) contributes to the ATP binding site.

Belongs to the GHMP kinase family. Homoserine kinase subfamily.

It is found in the cytoplasm. It catalyses the reaction L-homoserine + ATP = O-phospho-L-homoserine + ADP + H(+). Its pathway is amino-acid biosynthesis; L-threonine biosynthesis; L-threonine from L-aspartate: step 4/5. In terms of biological role, catalyzes the ATP-dependent phosphorylation of L-homoserine to L-homoserine phosphate. This chain is Homoserine kinase, found in Pyrococcus horikoshii (strain ATCC 700860 / DSM 12428 / JCM 9974 / NBRC 100139 / OT-3).